The following is a 347-amino-acid chain: Ubiquinone biosynthesis protein coq-4, mitochondrial (347 aa).

Residues 1 to 49 (MEVTALRRSAALVARASSQNAIRPAVCAAISSTSPTPPTQIQTQQTRQF) constitute a mitochondrion transit peptide. His-185, Asp-186, His-189, and Glu-201 together coordinate Zn(2+). The tract at residues 284-310 (IRKREREEKRRRKEMERMLSGRGTEDV) is disordered.

This sequence belongs to the COQ4 family. Component of a multi-subunit COQ enzyme complex, composed of at least coq-3, coq-4, coq-5, coq-6, coq-7 and coq-9. Zn(2+) serves as cofactor.

It localises to the mitochondrion inner membrane. The enzyme catalyses a 4-hydroxy-3-methoxy-5-(all-trans-polyprenyl)benzoate + H(+) = a 2-methoxy-6-(all-trans-polyprenyl)phenol + CO2. It functions in the pathway cofactor biosynthesis; ubiquinone biosynthesis. Its function is as follows. Lyase that catalyzes the C1-decarboxylation of 4-hydroxy-3-methoxy-5-(all-trans-polyprenyl)benzoic acid into 2-methoxy-6-(all-trans-polyprenyl)phenol during ubiquinone biosynthesis. This is Ubiquinone biosynthesis protein coq-4, mitochondrial from Neurospora crassa (strain ATCC 24698 / 74-OR23-1A / CBS 708.71 / DSM 1257 / FGSC 987).